A 158-amino-acid chain; its full sequence is Large ribosomal subunit protein bL17 (158 aa).

Residues 119 to 158 form a disordered region; that stretch reads APAAAPEAEEKGEKKAAKAPKAEKAPKAEKKPAKKAAKAE. Basic and acidic residues predominate over residues 126 to 158; it reads AEEKGEKKAAKAPKAEKAPKAEKKPAKKAAKAE.

Belongs to the bacterial ribosomal protein bL17 family. In terms of assembly, part of the 50S ribosomal subunit. Contacts protein L32.

This Anaeromyxobacter sp. (strain K) protein is Large ribosomal subunit protein bL17.